A 236-amino-acid chain; its full sequence is Ubiquinone biosynthesis O-methyltransferase (236 aa).

The S-adenosyl-L-methionine site is built by R39, G59, D80, and M124.

It belongs to the methyltransferase superfamily. UbiG/COQ3 family.

It carries out the reaction a 3-demethylubiquinol + S-adenosyl-L-methionine = a ubiquinol + S-adenosyl-L-homocysteine + H(+). It catalyses the reaction a 3-(all-trans-polyprenyl)benzene-1,2-diol + S-adenosyl-L-methionine = a 2-methoxy-6-(all-trans-polyprenyl)phenol + S-adenosyl-L-homocysteine + H(+). Its pathway is cofactor biosynthesis; ubiquinone biosynthesis. In terms of biological role, O-methyltransferase that catalyzes the 2 O-methylation steps in the ubiquinone biosynthetic pathway. The sequence is that of Ubiquinone biosynthesis O-methyltransferase from Shewanella baltica (strain OS223).